We begin with the raw amino-acid sequence, 1405 residues long: DNA-directed RNA polymerase subunit beta' (1405 aa).

Positions 70, 72, 85, and 88 each coordinate Zn(2+). Positions 460, 462, and 464 each coordinate Mg(2+). The Zn(2+) site is built by Cys-814, Cys-888, Cys-895, and Cys-898.

This sequence belongs to the RNA polymerase beta' chain family. As to quaternary structure, the RNAP catalytic core consists of 2 alpha, 1 beta, 1 beta' and 1 omega subunit. When a sigma factor is associated with the core the holoenzyme is formed, which can initiate transcription. It depends on Mg(2+) as a cofactor. The cofactor is Zn(2+).

It carries out the reaction RNA(n) + a ribonucleoside 5'-triphosphate = RNA(n+1) + diphosphate. Its function is as follows. DNA-dependent RNA polymerase catalyzes the transcription of DNA into RNA using the four ribonucleoside triphosphates as substrates. This chain is DNA-directed RNA polymerase subunit beta', found in Shewanella putrefaciens (strain CN-32 / ATCC BAA-453).